The chain runs to 353 residues: MSEPLKPRIDFAEPLKEEPTSVFKAQQTFSEAESRTFAPAAIDERPEDEGVAEAAVDAALRPKRSLWRKMVMGGLALFGASVVGQGVQWTMNAWQTQDWVALGGCAAGALIVGAGVGSVVTEWRRLWRLRQRAHERDEARELLHSHSVGKGRAFCEKLAQQAGIDQSHPALQRWYAAIHETQNDREIVGLYAHLVQPVLDAQARREISRFAAESTLMIAVSPLALVDMAFIAWRNLRLINRIATLYGIELGYYSRLRLFRLVLLNIAFAGASELVREVGMDWMSQDLAARLSTRAAQGIGAGLLTARLGIKAMELCRPLPWIDNDKPRLGDFRRQLIGQLKETLQKSKSSPEK.

The next 3 helical transmembrane spans lie at 70 to 90 (MVMG…VQWT), 100 to 120 (VALG…GSVV), and 213 to 233 (ESTL…FIAW).

This sequence belongs to the UPF0283 family.

The protein resides in the cell inner membrane. The chain is UPF0283 membrane protein YcjF from Salmonella schwarzengrund (strain CVM19633).